The sequence spans 230 residues: 2,3-bisphosphoglycerate-dependent phosphoglycerate mutase (230 aa).

Substrate-binding positions include 8-15 (RHGESEWN), 21-22 (TG), Arg-60, 87-90 (ERHY), Lys-98, 114-115 (RR), and 183-184 (GN). His-9 functions as the Tele-phosphohistidine intermediate in the catalytic mechanism. Glu-87 acts as the Proton donor/acceptor in catalysis.

Belongs to the phosphoglycerate mutase family. BPG-dependent PGAM subfamily.

The enzyme catalyses (2R)-2-phosphoglycerate = (2R)-3-phosphoglycerate. The protein operates within carbohydrate degradation; glycolysis; pyruvate from D-glyceraldehyde 3-phosphate: step 3/5. Its function is as follows. Catalyzes the interconversion of 2-phosphoglycerate and 3-phosphoglycerate. The polypeptide is 2,3-bisphosphoglycerate-dependent phosphoglycerate mutase (Streptococcus gordonii (strain Challis / ATCC 35105 / BCRC 15272 / CH1 / DL1 / V288)).